Reading from the N-terminus, the 208-residue chain is EF-hand protein 5 variant 1 (208 aa).

Positions 1-34 are disordered; it reads MQARGTVKVQGDAKVDGKMSTGQHSHHQHLNSTQ. EF-hand domains lie at 64 to 98, 99 to 134, 135 to 170, and 171 to 206; these read MAEGFYVLSGGYKKLFIPSKDVYALMQNVGMHLTE, EEFHDALRVIGQSEPQNADELSFSDFLLLMTREVDD, TMADELRSAFFHYDKYKTGYVTRKQFTELFATLGER, and STPEELEELLAVAEVDETDDKIDYNRFVNELTSRVN. Residues Glu-118, Asp-123, Asp-148, Thr-152, and Tyr-154 each coordinate Ca(2+).

This is EF-hand protein 5 variant 1 from Trypanosoma cruzi.